The primary structure comprises 112 residues: Mitochondrial import inner membrane translocase subunit TIM14-3 (112 aa).

A2 is subject to N-acetylalanine. The chain crosses the membrane as a helical span at residues 6-28 (IAGAAVAAAAVAGRYGILAWQAF). The 60-residue stretch at 53–112 (EAALILGVRESVVADKVKEAHRRVMVANHPDAGGSHYLASKINEAKDMMLGKSNNSGSAF) folds into the J domain.

The protein belongs to the TIM14 family. As to quaternary structure, probable component of the PAM complex at least composed of a mitochondrial HSP70 protein, TIMM44 and TIMM14. The complex interacts with the TIMM23 component of the TIM17:23 complex.

The protein resides in the mitochondrion. It localises to the mitochondrion inner membrane. In terms of biological role, component of the PAM complex, a complex required for the translocation of transit peptide-containing proteins from the inner membrane into the mitochondrial matrix in an ATP-dependent manner. In Arabidopsis thaliana (Mouse-ear cress), this protein is Mitochondrial import inner membrane translocase subunit TIM14-3 (TIM14-3).